A 607-amino-acid chain; its full sequence is ATP-dependent rRNA helicase SPB4 (607 aa).

The Q motif motif lies at 7-35; the sequence is WDDLEYPIQPWIRSAVDVMGFENMTPVQA. The 187-residue stretch at 38-224 folds into the Helicase ATP-binding domain; it reads IPLFARNKDV…KTGLRNPVKV (187 aa). 51 to 58 contacts ATP; it reads SVTGSGKT. Residues 172 to 175 carry the DEAD box motif; the sequence is DEAD. In terms of domain architecture, Helicase C-terminal spans 248 to 404; it reads KLEQVISIIN…EISLDIVNLP (157 aa). The segment at 527-607 is disordered; the sequence is KSELKKKNMS…NGMQGSFDDL (81 aa). Residues 529–565 adopt a coiled-coil conformation; that stretch reads ELKKKNMSWSNNTQSKEEKVERRTKMALKRKRIEEEL. 2 stretches are compositionally biased toward basic and acidic residues: residues 543 to 552 and 560 to 570; these read SKEEKVERRT and RIEEELSKEAD. Residues 587-601 show a composition bias toward polar residues; sequence ILQNKKSKNSNNGMQ.

This sequence belongs to the DEAD box helicase family. DDX55/SPB4 subfamily. In terms of assembly, component of pre-60S ribosomal complexes.

It localises to the nucleus. Its subcellular location is the nucleolus. It catalyses the reaction ATP + H2O = ADP + phosphate + H(+). In terms of biological role, ATP-binding RNA helicase involved in the biogenesis of 60S ribosomal subunits. Binds 90S pre-ribosomal particles and dissociates from pre-60S ribosomal particles after processing of 27SB pre-rRNA. Required for the normal formation of 18S rRNA through the processing of pre-rRNAs at sites A0, A1 and A2, and the normal formation of 25S and 5.8S rRNAs through the processing of pre-rRNAs at sites C1 and C2. This chain is ATP-dependent rRNA helicase SPB4, found in Vanderwaltozyma polyspora (strain ATCC 22028 / DSM 70294 / BCRC 21397 / CBS 2163 / NBRC 10782 / NRRL Y-8283 / UCD 57-17) (Kluyveromyces polysporus).